The sequence spans 537 residues: Tyrosine-protein phosphatase CDC14 homolog (537 aa).

The Tyrosine-protein phosphatase domain maps to aspartate 182 to glutamate 345. The Phosphocysteine intermediate role is filled by cysteine 286. The interval glutamate 359–serine 537 is disordered. Residues asparagine 370–threonine 382 are compositionally biased toward polar residues. A compositionally biased stretch (low complexity) spans proline 400–serine 411. Positions alanine 421–tyrosine 437 are enriched in polar residues. Threonine 453 bears the Phosphothreonine mark. A phosphoserine mark is found at serine 468 and serine 470. Residues arginine 490 to serine 502 show a composition bias toward low complexity. Serine 513 bears the Phosphoserine mark. A compositionally biased stretch (polar residues) spans methionine 514 to glycine 523. Basic residues predominate over residues alanine 526–serine 537.

The protein belongs to the protein-tyrosine phosphatase family. Non-receptor class CDC14 subfamily. As to quaternary structure, interacts with ark1 at the kinetochores. Interacts with bir1, cdc25, mid1, nbl1, pic1, and rad24. In terms of processing, phosphorylated by cds1, chk1, pmk1, and cdc2 upon Hydroxylurea and H(2)O(2) stress treatment. Phosphorylation regulates the nucleolar-to-nucleoplasmic transition. Is able to autodephosphorylate.

The protein resides in the nucleus. Its subcellular location is the nucleolus. The protein localises to the cytoplasm. It localises to the cytoskeleton. It is found in the microtubule organizing center. The protein resides in the spindle pole body. It carries out the reaction O-phospho-L-tyrosyl-[protein] + H2O = L-tyrosyl-[protein] + phosphate. Protein phosphatase which antagonizes mitotic cyclin-dependent kinase cdc2, the inactivation of which is essential for exit from mitosis. To access its substrates, is released from nucleolar sequestration during mitosis. Plays an essential in coordinating the nuclear division cycle with cytokinesis through the cytokinesis checkpoint. Involved in chromosome segregation, where it is required for meiosis I spindle dissambly as well as for establishing two consecutive chromosome segregation phases. Allows damaged actomyosin rings to be maintained to facilitate completion of cell division in response to minor perturbation of the cell division machinery. Dephosphorylates the mitotic inducer cdc25 for its rapid degradation. Down-regulation of cdc25 activity ensures a prompt inactivation of mitotic cdc2 complexes to trigger cell division. Also dephosphorylates cdc2-phosphorylated nsk1, allowing nsk1-binding to kinetochores and spindle. Dephosphorylates ase1, which is essential for spindle midzone assembly and for continuous extension of the anaphase spindle. Tethered to the contractile ring by mid1, where it dephosphorylates cdc15. The sequence is that of Tyrosine-protein phosphatase CDC14 homolog (clp1) from Schizosaccharomyces pombe (strain 972 / ATCC 24843) (Fission yeast).